The chain runs to 957 residues: Outer kinetochore KNL1 complex subunit knl-1 (957 aa).

Repeat unit 1 spans residues 87–90 (MDIT). The 8 X 4 AA repeats of M-[D/E]-[I/L/M]-[S/T] stretch occupies residues 87 to 393 (MDITGLNSTP…NFDDVAMDIT (307 aa)). The disordered stretch occupies residues 89–111 (ITGLNSTPVTPKTQTPFNGSMDM). Residues 91–106 (GLNSTPVTPKTQTPFN) are compositionally biased toward polar residues. 7 tandem repeats follow at residues 109-112 (MDMS), 206-209 (MDIT), 251-254 (MDIT), 282-285 (MDLT), 326-329 (MEMT), 367-370 (MEMT), and 390-393 (MDIT). The segment at 476-504 (SLQQSSMRMSTTITEDVTASKNPESSTIS) is disordered. A coiled-coil region spans residues 830-950 (KFAKESNVEI…RKKKEEMVER (121 aa)).

Component of the KNL1 complex composed of knl-1 and kbp-5. Part of the ten-subunit outer kinetochore KMN network that includes the KNL1, MIS12 and NDC80 complexes. Interacts with the protein phosphatase 1 (PP1) catalytic subunit gsp-1; the interaction is direct. Interacts with the protein phosphatase 1 (PP1) catalytic subunit gsp-2; the interaction is direct. Interacts with the MIS12 complex subunits kbp-1, kbp-2 and mis-12. Interacts with the NDC80 complex components ndc-80 and him-10. Interacts with knl-3. Interacts with kbp-3. Interacts with kbp-4. Interacts with kbp-5.

The protein resides in the cytoplasm. Its subcellular location is the cell cortex. The protein localises to the chromosome. It localises to the centromere. It is found in the kinetochore. Acts as a component of the outer kinetochore KNL1 complex that serves as a docking point for spindle assembly checkpoint components and mediates microtubule-kinetochore interactions. Kinetochores, consisting of a centromere-associated inner segment and a microtubule-contacting outer segment, play a crucial role in chromosome segregation by mediating the physical connection between centromeric DNA and spindle microtubules. The outer kinetochore is made up of the ten-subunit KMN network, comprising the MIS12, NDC80 and KNL1 complexes, and auxiliary microtubule-associated components; together they connect the outer kinetochore with the inner kinetochore, bind microtubules, and mediate interactions with mitotic checkpoint proteins that delay anaphase until chromosomes are bioriented on the spindle. Binds the protein phosphatase 1 catalytic subunits gsp-1 and gsp-2, which has a role in delaying formation of load-bearing kinetochore-microtubule attachments. Required for the recruitment of spindle-assembly checkpoint components bub-1 and mdf-1/2 to unattached kinetochores. Binds microtubules which plays a role in silencing of the spindle assembly checkpoint, but not the formation of load-bearing microtubule-kinetochore attachments. Has a role in the correct localization of the spindly-like protein spdl-1 and the RZZ complex that is composed of rod-1, czw-1 and zwl-1 to kinetochores. The protein is Outer kinetochore KNL1 complex subunit knl-1 of Caenorhabditis briggsae.